The sequence spans 595 residues: Tyrosine-protein phosphatase cdcA (595 aa).

The segment at Thr-32 to Arg-57 is disordered. Residues Pro-44–Arg-57 are compositionally biased toward basic residues. Positions Leu-233 to Glu-381 constitute a Tyrosine-protein phosphatase domain. Cys-322 serves as the catalytic Phosphocysteine intermediate. The segment at Gln-392–Ala-595 is disordered. Residues Arg-449–Tyr-461 are compositionally biased toward basic residues. Over residues Val-471–Asp-483 the composition is skewed to basic and acidic residues. Residues Ser-502–Leu-526 show a composition bias toward polar residues.

Belongs to the protein-tyrosine phosphatase family. Non-receptor class CDC14 subfamily.

It localises to the nucleus. Its subcellular location is the cytoplasm. The protein localises to the cell septum. The catalysed reaction is O-phospho-L-tyrosyl-[protein] + H2O = L-tyrosyl-[protein] + phosphate. Protein phosphatase which antagonizes mitotic cyclin-dependent kinase nimX, the inactivation of which is essential for exit from mitosis. To access its substrates, is released from nucleolar sequestration during mitosis. Plays an essential in coordinating the nuclear division cycle with cytokinesis through the cytokinesis checkpoint. Involved in chromosome segregation, where it is required for meiosis I spindle dissambly as well as for establishing two consecutive chromosome segregation phases. Required for the transcription of the two major endoglucanase genes eglA and eglB and growth on synthetic cellulose as the sole carbon source. This is Tyrosine-protein phosphatase cdcA (cdcA) from Emericella nidulans (strain FGSC A4 / ATCC 38163 / CBS 112.46 / NRRL 194 / M139) (Aspergillus nidulans).